The sequence spans 231 residues: dTTP/UTP pyrophosphatase (231 aa).

Residue Asp81 is the Proton acceptor of the active site.

The protein belongs to the Maf family. YhdE subfamily. A divalent metal cation serves as cofactor.

The protein resides in the cytoplasm. The enzyme catalyses dTTP + H2O = dTMP + diphosphate + H(+). It catalyses the reaction UTP + H2O = UMP + diphosphate + H(+). In terms of biological role, nucleoside triphosphate pyrophosphatase that hydrolyzes dTTP and UTP. May have a dual role in cell division arrest and in preventing the incorporation of modified nucleotides into cellular nucleic acids. This Lawsonia intracellularis (strain PHE/MN1-00) protein is dTTP/UTP pyrophosphatase.